A 288-amino-acid chain; its full sequence is Acetyl-coenzyme A carboxylase carboxyl transferase subunit beta (288 aa).

In terms of domain architecture, CoA carboxyltransferase N-terminal spans 30–288 (IMTKCPKCKK…KMHQEVKTNA (259 aa)). Zn(2+) is bound by residues C34, C37, C53, and C56. A C4-type zinc finger spans residues 34 to 56 (CPKCKKIMYTKELAENLNVCFNC).

This sequence belongs to the AccD/PCCB family. As to quaternary structure, acetyl-CoA carboxylase is a heterohexamer composed of biotin carboxyl carrier protein (AccB), biotin carboxylase (AccC) and two subunits each of ACCase subunit alpha (AccA) and ACCase subunit beta (AccD). Zn(2+) is required as a cofactor.

It localises to the cytoplasm. The catalysed reaction is N(6)-carboxybiotinyl-L-lysyl-[protein] + acetyl-CoA = N(6)-biotinyl-L-lysyl-[protein] + malonyl-CoA. The protein operates within lipid metabolism; malonyl-CoA biosynthesis; malonyl-CoA from acetyl-CoA: step 1/1. Functionally, component of the acetyl coenzyme A carboxylase (ACC) complex. Biotin carboxylase (BC) catalyzes the carboxylation of biotin on its carrier protein (BCCP) and then the CO(2) group is transferred by the transcarboxylase to acetyl-CoA to form malonyl-CoA. This Staphylococcus saprophyticus subsp. saprophyticus (strain ATCC 15305 / DSM 20229 / NCIMB 8711 / NCTC 7292 / S-41) protein is Acetyl-coenzyme A carboxylase carboxyl transferase subunit beta.